The sequence spans 115 residues: Hydrogenase maturation factor HypA (115 aa).

Ni(2+) is bound at residue histidine 2. Zn(2+) contacts are provided by cysteine 73, cysteine 76, cysteine 89, and cysteine 92.

This sequence belongs to the HypA/HybF family.

Functionally, involved in the maturation of [NiFe] hydrogenases. Required for nickel insertion into the metal center of the hydrogenase. The chain is Hydrogenase maturation factor HypA from Aquifex aeolicus (strain VF5).